A 471-amino-acid chain; its full sequence is Mannose-1-phosphate guanylyltransferase (471 aa).

This sequence belongs to the mannose-6-phosphate isomerase type 2 family.

It carries out the reaction alpha-D-mannose 1-phosphate + GTP + H(+) = GDP-alpha-D-mannose + diphosphate. It participates in nucleotide-sugar biosynthesis; GDP-alpha-D-mannose biosynthesis; GDP-alpha-D-mannose from alpha-D-mannose 1-phosphate (GTP route): step 1/1. Involved in the biosynthesis of the K2 capsular polysaccharide biosynthesis. In Klebsiella pneumoniae, this protein is Mannose-1-phosphate guanylyltransferase (manC).